Reading from the N-terminus, the 763-residue chain is Probable ubiquitin carboxyl-terminal hydrolase MINDY-4 (763 aa).

Residue Ser143 is modified to Phosphoserine. The segment at 154–368 (SSKRSSHKSR…SQPASLRKNQ (215 aa)) is disordered. Basic and acidic residues predominate over residues 180-202 (EKTDKLPMSEPSLDTKRMGEKVR). A phosphoserine mark is found at Ser220 and Ser224. Positions 252–261 (ELSTHTSTCP) are enriched in polar residues. Positions 267-278 (PASSTASTSRSP) are enriched in low complexity. Position 296 is a phosphoserine (Ser296). A compositionally biased stretch (basic and acidic residues) spans 346 to 355 (TQERPERAFE). Residues 357–368 (QGSQPASLRKNQ) are compositionally biased toward polar residues. Cys463 functions as the Nucleophile in the catalytic mechanism. His683 (proton acceptor) is an active-site residue.

Belongs to the MINDY deubiquitinase family. FAM188 subfamily.

It catalyses the reaction Thiol-dependent hydrolysis of ester, thioester, amide, peptide and isopeptide bonds formed by the C-terminal Gly of ubiquitin (a 76-residue protein attached to proteins as an intracellular targeting signal).. In terms of biological role, probable hydrolase that can remove 'Lys-48'-linked conjugated ubiquitin from proteins. This is Probable ubiquitin carboxyl-terminal hydrolase MINDY-4 (MINDY4) from Bos taurus (Bovine).